The sequence spans 131 residues: uncharacterized protein (131 aa).

A coiled-coil region spans residues 4–44 (QKPEQDVNKKIEELEKKVQELQEQLEKTKQAVKTVASILDN).

This is an uncharacterized protein from Sulfolobus islandicus filamentous virus (isolate Iceland/Hveragerdi) (SIFV).